The sequence spans 365 residues: Probable dual-specificity RNA methyltransferase RlmN (365 aa).

Catalysis depends on glutamate 111, which acts as the Proton acceptor. The region spanning 117–351 (ADDRMTACIS…VNIRRSRGKD (235 aa)) is the Radical SAM core domain. A disulfide bond links cysteine 124 and cysteine 356. Positions 131, 135, and 138 each coordinate [4Fe-4S] cluster. S-adenosyl-L-methionine-binding positions include 182-183 (GE), serine 214, 237-239 (SLH), and asparagine 313. The active-site S-methylcysteine intermediate is the cysteine 356.

It belongs to the radical SAM superfamily. RlmN family. It depends on [4Fe-4S] cluster as a cofactor.

It localises to the cytoplasm. It catalyses the reaction adenosine(2503) in 23S rRNA + 2 reduced [2Fe-2S]-[ferredoxin] + 2 S-adenosyl-L-methionine = 2-methyladenosine(2503) in 23S rRNA + 5'-deoxyadenosine + L-methionine + 2 oxidized [2Fe-2S]-[ferredoxin] + S-adenosyl-L-homocysteine. It carries out the reaction adenosine(37) in tRNA + 2 reduced [2Fe-2S]-[ferredoxin] + 2 S-adenosyl-L-methionine = 2-methyladenosine(37) in tRNA + 5'-deoxyadenosine + L-methionine + 2 oxidized [2Fe-2S]-[ferredoxin] + S-adenosyl-L-homocysteine. Functionally, specifically methylates position 2 of adenine 2503 in 23S rRNA and position 2 of adenine 37 in tRNAs. The protein is Probable dual-specificity RNA methyltransferase RlmN of Cytophaga hutchinsonii (strain ATCC 33406 / DSM 1761 / CIP 103989 / NBRC 15051 / NCIMB 9469 / D465).